The sequence spans 24 residues: M-poneritoxin-Ng2b (24 aa).

At L24 the chain carries Leucine amide.

Expressed by the venom gland.

The protein resides in the secreted. In terms of biological role, has a broad spectrum of activity against both Gram-positive and Gram-negative bacteria. Is inactive against yeast, erythrocytes, and insects. The protein is M-poneritoxin-Ng2b of Neoponera goeldii (Ponerine ant).